The primary structure comprises 394 residues: Mannosyl-3-phosphoglycerate synthase (394 aa).

It belongs to the glycosyltransferase 2 family.

The protein localises to the cytoplasm. It catalyses the reaction (2R)-3-phosphoglycerate + GDP-alpha-D-mannose = 2-O-(alpha-D-mannosyl)-3-phosphoglycerate + GDP + H(+). It participates in carbohydrate biosynthesis; 2-(alpha-D-mannosyl)-D-glycerate biosynthesis; 2-(alpha-D-mannosyl)-D-glycerate from GDP-alpha-D-mannose (MPG route): step 1/2. Functionally, transfers a mannosyl group from GDP-mannose to phosphoglycerate to form mannosyl-3-phosphoglycerate (MPG). The sequence is that of Mannosyl-3-phosphoglycerate synthase (mngA) from Pyrococcus abyssi (strain GE5 / Orsay).